The following is a 310-amino-acid chain: Signal peptidase I (310 aa).

The chain crosses the membrane as a helical span at residues L5–I25. Topologically, residues L26 to S57 are cytoplasmic. Residues F58–I78 traverse the membrane as a helical segment. The Extracellular segment spans residues P79 to Y310. Catalysis depends on residues S82 and K137.

The protein belongs to the peptidase S26 family.

It localises to the cell membrane. It carries out the reaction Cleavage of hydrophobic, N-terminal signal or leader sequences from secreted and periplasmic proteins.. The polypeptide is Signal peptidase I (lepB) (Buchnera aphidicola subsp. Baizongia pistaciae (strain Bp)).